Consider the following 37-residue polypeptide: Gene 40 protein (37 aa).

The chain is Gene 40 protein (40) from Mycobacterium phage L5 (Mycobacteriophage L5).